The chain runs to 830 residues: Leucine--tRNA ligase (830 aa).

A 'HIGH' region motif is present at residues Pro48 to His58. The 'KMSKS' region motif lies at Lys596–Ser600. Lys599 lines the ATP pocket.

This sequence belongs to the class-I aminoacyl-tRNA synthetase family.

Its subcellular location is the cytoplasm. The enzyme catalyses tRNA(Leu) + L-leucine + ATP = L-leucyl-tRNA(Leu) + AMP + diphosphate. The protein is Leucine--tRNA ligase of Helicobacter hepaticus (strain ATCC 51449 / 3B1).